A 1481-amino-acid polypeptide reads, in one-letter code: MKTYTYQNTLISKKQLKQLLSWSFTTYDSMQACSLADELKYLGFKYASKAGISISIEDLKVPYNKNLLLKIAHQEINSSEKIYLKGKLTDVERFQKLIDTWNLTSESLKDELVSYFKRYDPLNSVYIMAFSGARGNLSQVRQLVGMRGLMSDPSGELLKLPIKKNFREGLTITDYLMSGYGARKGIIDTALKTANSGYLTRRLIDVAQDIIIREKDCLTKHSCLIINFESNLRIKKSVYEKILGRLLNKSIYDEKTKELIAEVNTQVTPNLIRTLKQKQIKHFYVRSPLTCSLYRSICQKCYGWDLANENLIDIGERIGIIAGQSIGEPGTQLTMRTFHTGGIFTSEIRGTIRSPISGIVKFSKRLKRIPIRTNRGEDVLLTKNAGSLIIIPEEKNSKPVKLELFRNTVVFHKNNQYIQKNAIIAELVDDEKQTRTEIKPVLTTTSGEVFIPRIINKLDNINKTKLLWILSGNVYQAPQHSFLNFYNDYKINKNSYIFRTKLINDFSGFTVFTNSKYNLFQRILQLVSNSCWILPNSKIQKLQSSLNKKPYFLNIKKLKYLIDLKLLNSKYFIEISSNKHFGTLVTNNYQTLTGGIGYYDFRCRDRIISDNKTISYFLPWEPKKKSISLEFLTLLESQFLKSFDILSLILKKNPDLEDCRLAFFPNNFNLHSKVETFSHYSKQTNSLNLAWFSIVKQFPYRSVIWMSEENYELNCDKNLLLVEHGNFISKNFEIVPGIVSKTGGIVMISDKNKLTQEITIKTGSVYEGSLFNYFKNKIFYPGEIILDSLKITQPSFCECFEGRFNDQLLIRPLQVYEVPQFKSLIQIFGTKFQTDLPFNLTNNISYRCKSNKIIKESRNFTIIDNILDVNIRTFAKKQFEIELFSDVKKNHLNFLVSEKLSLNHFILPQLRYTDIQSCLLVQTHQFIDSYTILGYLEVMISKSLEIVQFKSKYKDSKQICLISNEDCRTIPKNSVKNKTIDNLLINNANVNYTGKILMDNDEFVTIQKGRPYFFPNCKNEEAIINTDLIYKPLQSSSFLDNSKLKTNRLVYLNYFDITKGLINQRIHSQDIICKFSKMFIKKNGKLYSSLLAGLINRIAIINKQLDSQQIPSCPTSIRKYREENSSKKLKKRMKRKYKKITGIKTLLFIKNSELNLNPLKDTQDRKNSLTVATFMLSKFYKFTGGIHSITEDYFDEEVNSVFCKNGEFVKNGQTIGLLNFEKEITGDIVQGLPRVEQLLEARKKKQITKNLPINKKKGLLTQTTSIDSYFEFKKLGTSIKENEKINPHNLLKVYFNYYGLIKTFFCENSYTKDSYRLFNNYEASYRSFKKVQSLILNSVQSVYKSQGVSIADKHLEVIIKQMTTKVLITHQGNTSLLPREVIDLYHIEYINKIARIHKKHPALYVPLLLGITKAALNNPSFISAASFQETTRVLTKAAIEGRVDWLRGLKENIIIGHLMPAGTGSPVYTNCFKKSFENNLN.

Zn(2+)-binding residues include cysteine 217, cysteine 291, cysteine 298, and cysteine 301.

The protein belongs to the RNA polymerase beta' chain family. RpoC2 subfamily. In plastids the minimal PEP RNA polymerase catalytic core is composed of four subunits: alpha, beta, beta', and beta''. When a (nuclear-encoded) sigma factor is associated with the core the holoenzyme is formed, which can initiate transcription. The cofactor is Zn(2+).

It is found in the plastid. Its subcellular location is the chloroplast. It catalyses the reaction RNA(n) + a ribonucleoside 5'-triphosphate = RNA(n+1) + diphosphate. Functionally, DNA-dependent RNA polymerase catalyzes the transcription of DNA into RNA using the four ribonucleoside triphosphates as substrates. The protein is DNA-directed RNA polymerase subunit beta'' of Trieres chinensis (Marine centric diatom).